Consider the following 159-residue polypeptide: ATP synthase subunit b (159 aa).

Residues 8–28 (ILATIINFIILILILKHFFWD) traverse the membrane as a helical segment.

It belongs to the ATPase B chain family. As to quaternary structure, F-type ATPases have 2 components, F(1) - the catalytic core - and F(0) - the membrane proton channel. F(1) has five subunits: alpha(3), beta(3), gamma(1), delta(1), epsilon(1). F(0) has three main subunits: a(1), b(2) and c(10-14). The alpha and beta chains form an alternating ring which encloses part of the gamma chain. F(1) is attached to F(0) by a central stalk formed by the gamma and epsilon chains, while a peripheral stalk is formed by the delta and b chains.

The protein localises to the cell membrane. Functionally, f(1)F(0) ATP synthase produces ATP from ADP in the presence of a proton or sodium gradient. F-type ATPases consist of two structural domains, F(1) containing the extramembraneous catalytic core and F(0) containing the membrane proton channel, linked together by a central stalk and a peripheral stalk. During catalysis, ATP synthesis in the catalytic domain of F(1) is coupled via a rotary mechanism of the central stalk subunits to proton translocation. Component of the F(0) channel, it forms part of the peripheral stalk, linking F(1) to F(0). The chain is ATP synthase subunit b from Clostridium perfringens (strain SM101 / Type A).